We begin with the raw amino-acid sequence, 60 residues long: Three-finger toxin Mnn I (60 aa).

Disulfide bonds link cysteine 3–cysteine 22, cysteine 17–cysteine 39, cysteine 41–cysteine 52, and cysteine 53–cysteine 58.

The protein belongs to the three-finger toxin family. Short-chain subfamily. Type I alpha-neurotoxin sub-subfamily. As to expression, expressed by the venom gland.

The protein localises to the secreted. Binds to muscle nicotinic acetylcholine receptor (nAChR) and inhibit acetylcholine from binding to the receptor, thereby impairing neuromuscular transmission. The polypeptide is Three-finger toxin Mnn I (Micrurus nigrocinctus (Central American coral snake)).